The chain runs to 86 residues: MRKDIHPDYRPVVFLDTTTGYKFLSGSTKTSKETIEFEGETYPLVRVEISSDSHPFYTGRQKFTQADGRVDRFNKKYGLKDANAAK.

The protein belongs to the bacterial ribosomal protein bL31 family. Type B subfamily. As to quaternary structure, part of the 50S ribosomal subunit.

The protein is Large ribosomal subunit protein bL31B of Streptococcus equi subsp. equi (strain 4047).